Consider the following 681-residue polypeptide: Peroxisomal acyl-coenzyme A oxidase 2 (681 aa).

Residues serine 3 and serine 9 each carry the phosphoserine modification. Threonine 13 bears the Phosphothreonine mark. An N6-succinyllysine mark is found at lysine 66, lysine 137, lysine 453, and lysine 561. A Microbody targeting signal motif is present at residues serine 679–leucine 681.

The protein belongs to the acyl-CoA oxidase family. As to quaternary structure, homodimer. FAD serves as cofactor. As to expression, present in all tissues tested: heart, brain, placenta, lung, liver, skeletal muscle, kidney and pancreas. Most abundant in heart, liver and kidney.

The protein localises to the peroxisome. The enzyme catalyses (25R)-3alpha,7alpha,12alpha-trihydroxy-5beta-cholestan-26-oyl-CoA + A + H2O = (24R,25R)-3alpha,7alpha,12alpha,24-tetrahydroxy-5beta-cholestan-26-oyl-CoA + AH2. It carries out the reaction (25S)-3alpha,7alpha,12alpha-trihydroxy-5beta-cholestan-26-oyl-CoA + O2 = (24E)-3alpha,7alpha,12alpha-trihydroxy-5beta-cholest-24-en-26-oyl-CoA + H2O2. Oxidizes the CoA esters of the bile acid intermediates di- and tri-hydroxycholestanoic acids. Capable of oxidizing short as well as long chain 2-methyl branched fatty acids. In Homo sapiens (Human), this protein is Peroxisomal acyl-coenzyme A oxidase 2.